The primary structure comprises 190 residues: Putative manganese efflux pump MntP (190 aa).

Transmembrane regions (helical) follow at residues 3–23 (PASI…AAVG), 39–59 (IGLI…FIGQ), 65–85 (VANW…LHMI), 106–128 (WLLA…GLAF), 133–155 (IWVA…VMLG), and 157–177 (AIGT…LIIV).

It belongs to the MntP (TC 9.B.29) family.

Its subcellular location is the cell inner membrane. Its function is as follows. Probably functions as a manganese efflux pump. This Pseudomonas fluorescens (strain ATCC BAA-477 / NRRL B-23932 / Pf-5) protein is Putative manganese efflux pump MntP.